The primary structure comprises 393 residues: NAD(P)H-quinone oxidoreductase subunit H, chloroplastic (393 aa).

It belongs to the complex I 49 kDa subunit family. NDH is composed of at least 16 different subunits, 5 of which are encoded in the nucleus.

The protein localises to the plastid. The protein resides in the chloroplast thylakoid membrane. It carries out the reaction a plastoquinone + NADH + (n+1) H(+)(in) = a plastoquinol + NAD(+) + n H(+)(out). The enzyme catalyses a plastoquinone + NADPH + (n+1) H(+)(in) = a plastoquinol + NADP(+) + n H(+)(out). In terms of biological role, NDH shuttles electrons from NAD(P)H:plastoquinone, via FMN and iron-sulfur (Fe-S) centers, to quinones in the photosynthetic chain and possibly in a chloroplast respiratory chain. The immediate electron acceptor for the enzyme in this species is believed to be plastoquinone. Couples the redox reaction to proton translocation, and thus conserves the redox energy in a proton gradient. The protein is NAD(P)H-quinone oxidoreductase subunit H, chloroplastic of Saccharum hybrid (Sugarcane).